The chain runs to 433 residues: MQALNITAEQFSRLLSAHNLTREQFIHRYGLRPLVYTPELPARAKVAFALAGALIFALALFGNSLVIYVVTRSKAMRTVTNIFICSLALSDLLIAFFCIPVTMLQNISDKWLGGAFICKMVPFVQSTAVVTEILTMTCIAVERHQGLVHPFKMKWQYTTRRAFTILGVVWLAAIIVGSPMWHVQRLEIKYDFLYEKEHICCLEEWASPVHQRIYSTFILVILFLLPLVVMLVLYSKIGYELWIKKRVGDSSALQTIHGKEMSKIARKKKRAVIMMVTVVALFAACWAPFHVVHMMVEYSNFEKEYDDVTIKMVFAVAQTIGFFNSICNPFVYAFMNENFKKNFLSAVCYCIVKESSSPARKPGNSGISMMQKRAKLSRPQRPVEETKGDTFSDASIDVKLCEQPREKRQLKRQLAFFSSELSENSTFGSGHEL.

Residues 1–46 (MQALNITAEQFSRLLSAHNLTREQFIHRYGLRPLVYTPELPARAKV) lie on the Extracellular side of the membrane. N5 and N19 each carry an N-linked (GlcNAc...) asparagine glycan. Residues 47 to 67 (AFALAGALIFALALFGNSLVI) traverse the membrane as a helical segment. Residues 68 to 81 (YVVTRSKAMRTVTN) are Cytoplasmic-facing. The chain crosses the membrane as a helical span at residues 82-102 (IFICSLALSDLLIAFFCIPVT). The Extracellular segment spans residues 103-120 (MLQNISDKWLGGAFICKM). The chain crosses the membrane as a helical span at residues 121-141 (VPFVQSTAVVTEILTMTCIAV). At 142-162 (ERHQGLVHPFKMKWQYTTRRA) the chain is on the cytoplasmic side. Residues 163-183 (FTILGVVWLAAIIVGSPMWHV) traverse the membrane as a helical segment. Over 184–212 (QRLEIKYDFLYEKEHICCLEEWASPVHQR) the chain is Extracellular. A helical transmembrane segment spans residues 213-233 (IYSTFILVILFLLPLVVMLVL). Topologically, residues 234-271 (YSKIGYELWIKKRVGDSSALQTIHGKEMSKIARKKKRA) are cytoplasmic. Residues 272-292 (VIMMVTVVALFAACWAPFHVV) traverse the membrane as a helical segment. Over 293 to 313 (HMMVEYSNFEKEYDDVTIKMV) the chain is Extracellular. The chain crosses the membrane as a helical span at residues 314-334 (FAVAQTIGFFNSICNPFVYAF). The Cytoplasmic portion of the chain corresponds to 335-433 (MNENFKKNFL…NSTFGSGHEL (99 aa)). Residues 356–389 (SSPARKPGNSGISMMQKRAKLSRPQRPVEETKGD) are disordered.

It belongs to the G-protein coupled receptor 1 family. As to expression, highly expressed in the adrenal gland and at moderate levels in the eye and testis. Expressed widely in the brain with high levels in the hypothalamus and moderate levels in the amygdala, basal forebrain, cortex, medulla oblongata, midbrain and thalamus.

The protein resides in the cell membrane. In terms of biological role, receptor for the orexigenic neuropeptide QRFP. The activity of this receptor is mediated by G proteins that modulate adenylate cyclase activity and intracellular calcium levels. This Rattus norvegicus (Rat) protein is Pyroglutamylated RF-amide peptide receptor (Qrfpr).